Here is a 57-residue protein sequence, read N- to C-terminus: uncharacterized protein (57 aa).

It is found in the plastid. This is an uncharacterized protein from Euglena longa (Euglenophycean alga).